The primary structure comprises 384 residues: MQSFLPFSRPAIGSEEINAVANVLGSGWITTGPQNHQLETDFCQIFGCKHAIAVCSATAGMHITLLALGIGPGDEVITPSQTWVSTINMIVLLGAEPVMVDVDRDTLMVNAAAIEAAITPNTKAIIPVHYAGAPCDLDALRQISQRHGIPLIEDAAHAVGTRYRDQWIGEQGTAIFSFHAIKNITCAEGGLVATDDDELAARVRRLKFHGLGVDAFDRQIQGRSPQAEVVEPGYKYNLSDIHAAIAVVQLRRLPEINARRQALVASYHKALAHLPLQPLALPHYSHQHAWHLFMVRVDEERCGISRDQLMACLKDMGIGSGLHFRAVHSQKYYRERYPHLCLPNTEWNSARLCTLPLFPDMLDSDIERVANALTTIIGSHRVTK.

Position 182 is an N6-(pyridoxal phosphate)lysine (lysine 182).

The protein belongs to the DegT/DnrJ/EryC1 family. ArnB subfamily. Homodimer. The cofactor is pyridoxal 5'-phosphate.

The enzyme catalyses UDP-4-amino-4-deoxy-beta-L-arabinose + 2-oxoglutarate = UDP-beta-L-threo-pentopyranos-4-ulose + L-glutamate. It functions in the pathway nucleotide-sugar biosynthesis; UDP-4-deoxy-4-formamido-beta-L-arabinose biosynthesis; UDP-4-deoxy-4-formamido-beta-L-arabinose from UDP-alpha-D-glucuronate: step 2/3. Its pathway is bacterial outer membrane biogenesis; lipopolysaccharide biosynthesis. Its function is as follows. Catalyzes the conversion of UDP-4-keto-arabinose (UDP-Ara4O) to UDP-4-amino-4-deoxy-L-arabinose (UDP-L-Ara4N). The modified arabinose is attached to lipid A and is required for resistance to polymyxin and cationic antimicrobial peptides. In Yersinia pseudotuberculosis serotype O:1b (strain IP 31758), this protein is UDP-4-amino-4-deoxy-L-arabinose--oxoglutarate aminotransferase.